The sequence spans 550 residues: Hydroxylamine reductase (550 aa).

Cys-3, Cys-6, Cys-18, and Cys-25 together coordinate [2Fe-2S] cluster. Hybrid [4Fe-2O-2S] cluster contacts are provided by His-249, Glu-273, Cys-317, Cys-405, Cys-433, Cys-458, Glu-492, and Lys-494. Residue Cys-405 is modified to Cysteine persulfide.

It belongs to the HCP family. The cofactor is [2Fe-2S] cluster. It depends on hybrid [4Fe-2O-2S] cluster as a cofactor.

It localises to the cytoplasm. It carries out the reaction A + NH4(+) + H2O = hydroxylamine + AH2 + H(+). Functionally, catalyzes the reduction of hydroxylamine to form NH(3) and H(2)O. In Escherichia coli O6:H1 (strain CFT073 / ATCC 700928 / UPEC), this protein is Hydroxylamine reductase.